The primary structure comprises 144 residues: Small ribosomal subunit protein eS19 (144 aa).

The protein belongs to the eukaryotic ribosomal protein eS19 family.

The polypeptide is Small ribosomal subunit protein eS19 (RPS19) (Argopecten irradians (Bay scallop)).